Here is a 526-residue protein sequence, read N- to C-terminus: Lysine--tRNA ligase (526 aa).

The 'HIGH' region motif lies at 44-52 (PSGLPHIGT). Residues 290–294 (KISKS) carry the 'KMSKS' region motif. Lys293 contacts ATP.

It belongs to the class-I aminoacyl-tRNA synthetase family.

The protein resides in the cytoplasm. It carries out the reaction tRNA(Lys) + L-lysine + ATP = L-lysyl-tRNA(Lys) + AMP + diphosphate. In Rickettsia typhi (strain ATCC VR-144 / Wilmington), this protein is Lysine--tRNA ligase.